A 73-amino-acid chain; its full sequence is Large ribosomal subunit protein bL27c (73 aa).

This sequence belongs to the bacterial ribosomal protein bL27 family.

It is found in the plastid. It localises to the chloroplast. The polypeptide is Large ribosomal subunit protein bL27c (rpl27) (Haptolina hirta (Plankton alga)).